Reading from the N-terminus, the 232-residue chain is Zinc-finger homeodomain protein 5 (232 aa).

Positions 1 to 11 (MELSEHEEDAG) are enriched in acidic residues. The tract at residues 1-25 (MELSEHEEDAGDVGGGCSSPPTPPH) is disordered. The ZF-HD dimerization-type; degenerate zinc-finger motif lies at 40–86 (YHECLRNHAAASGGHVVDGCGEFMPASTEEPLACAACGCHRSFHRRD). Residues 126–170 (GLPFPGYGTPSGGTGTTTASSSDERLRPSPVQPRRRSRTTFTREQ) form a disordered region. A DNA-binding region (homeobox) is located at residues 159-222 (RRRSRTTFTR…NNKHSFKQKQ (64 aa)).

As to quaternary structure, homo- and heterodimer with other ZFHD proteins.

The protein localises to the nucleus. Putative transcription factor. This chain is Zinc-finger homeodomain protein 5 (ZHD5), found in Oryza sativa subsp. japonica (Rice).